A 195-amino-acid polypeptide reads, in one-letter code: Thioredoxin reductase-like selenoprotein T (195 aa).

An N-terminal signal peptide occupies residues 1–19 (MRLLLLLLVAASAMVRSEA). A cross-link (cysteinyl-selenocysteine (Cys-Sec)) is located at residues 46 to 49 (CVSU). Residue selenocysteine 49 is a non-standard amino acid, selenocysteine. The chain crosses the membrane as a helical span at residues 85–103 (IASFLSVFKLVLIGLIIVG).

This sequence belongs to the SelWTH family. Selenoprotein T subfamily. Post-translationally, may contain a selenide-sulfide bond between Cys-46 and Sec-49. This bond is speculated to serve as redox-active pair. Ubiquitous. Highly expressed in the endocrine pancreas.

The protein localises to the endoplasmic reticulum membrane. It carries out the reaction [thioredoxin]-dithiol + NADP(+) = [thioredoxin]-disulfide + NADPH + H(+). In terms of biological role, selenoprotein with thioredoxin reductase-like oxidoreductase activity. Protects dopaminergic neurons against oxidative stress and cell death. Involved in ADCYAP1/PACAP-induced calcium mobilization and neuroendocrine secretion. Plays a role in fibroblast anchorage and redox regulation. In gastric smooth muscle, modulates the contraction processes through the regulation of calcium release and MYLK activation. In pancreatic islets, involved in the control of glucose homeostasis, contributes to prolonged ADCYAP1/PACAP-induced insulin secretion. The polypeptide is Thioredoxin reductase-like selenoprotein T (Homo sapiens (Human)).